Reading from the N-terminus, the 586-residue chain is Phosphatase and actin regulator 1 (586 aa).

A Nuclear localization signal motif is present at residues 62 to 83; sequence RRRSKFATLGRLFKPWKWRKKK. One copy of the RPEL 1 repeat lies at 92-117; it reads AALERKISMRQSREELIKRGVLKEMY. A disordered region spans residues 373-414; sequence ECEDDKENVPHETSYDDSSCLYSRDEEEDDDDDDDDEDDDSS. Over residues 397–413 the composition is skewed to acidic residues; it reads DEEEDDDDDDDDEDDDS. RPEL repeat units lie at residues 428-453, 466-491, and 504-529; these read DSLA…PMQT, TKLT…KPRN, and RRLT…ISFS.

This sequence belongs to the phosphatase and actin regulator family. In terms of assembly, interacts (via RPEL repeats) with ACTA1.

Its subcellular location is the cytoplasm. The protein localises to the synapse. It localises to the nucleus. Binds actin monomers (G actin) and plays a role in the reorganization of the actin cytoskeleton and in formation of actin stress fibers. This Xenopus laevis (African clawed frog) protein is Phosphatase and actin regulator 1 (phactr1).